A 168-amino-acid polypeptide reads, in one-letter code: Oleosin 18.2 kDa (168 aa).

N-acetylalanine is present on A2. Positions 2 to 45 (AEVRDRNLPHQVQVHPQYRLDNTTGGGYGAKNYHSGPSTSQVLA) are polar. 3 consecutive transmembrane segments (helical) span residues 43-63 (VLAV…AGLT), 76-96 (PLFI…AMAV), and 97-117 (TGFL…SYVL). The tract at residues 46 to 117 (VLTLLPIGGT…TGLSSLSYVL (72 aa)) is hydrophobic.

Belongs to the oleosin family.

It localises to the lipid droplet. The protein resides in the membrane. Functionally, may have a structural role to stabilize the lipid body during desiccation of the seed by preventing coalescence of the oil. Probably interacts with both lipid and phospholipid moieties of lipid bodies. May also provide recognition signals for specific lipase anchorage in lipolysis during seedling growth. This Gossypium hirsutum (Upland cotton) protein is Oleosin 18.2 kDa (MATP6-A).